The chain runs to 812 residues: Endogenous retrovirus group K member 18 Pol protein (812 aa).

Residues leucine 57–isoleucine 245 form the Reverse transcriptase domain. The LPQG signature appears at leucine 161–glycine 164. Residues tyrosine 195–aspartate 198 carry the YXDD motif. The region spanning leucine 460 to isoleucine 590 is the RNase H type-1 domain. 4 residues coordinate Mg(2+): aspartate 469, glutamate 497, aspartate 517, and aspartate 582. An Integrase-type zinc finger spans residues serine 587–glutamine 628. Residues histidine 596, histidine 600, cysteine 624, and cysteine 627 each contribute to the Zn(2+) site. An Integrase catalytic domain is found at alanine 637–lysine 803.

It belongs to the beta type-B retroviral polymerase family. HERV class-II K(HML-2) pol subfamily.

It carries out the reaction DNA(n) + a 2'-deoxyribonucleoside 5'-triphosphate = DNA(n+1) + diphosphate. It catalyses the reaction Endonucleolytic cleavage to 5'-phosphomonoester.. Its function is as follows. Early post-infection, the reverse transcriptase converts the viral RNA genome into double-stranded viral DNA. The RNase H domain of the reverse transcriptase performs two functions. It degrades the RNA template and specifically removes the RNA primer from the RNA/DNA hybrid. Following nuclear import, the integrase catalyzes the insertion of the linear, double-stranded viral DNA into the host cell chromosome. Endogenous Pol proteins may have kept, lost or modified their original function during evolution. The protein is Endogenous retrovirus group K member 18 Pol protein (ERVK-18) of Homo sapiens (Human).